A 596-amino-acid chain; its full sequence is Delta(24(24(1)))-sterol reductase (596 aa).

Residues 1 to 122 (MSSRYSLRQT…GHATNGHATS (122 aa)) form a disordered region. The segment covering 98–112 (NGNGNGYTNGHGNGN) has biased composition (gly residues). A run of 8 helical transmembrane segments spans residues 168 to 188 (FGTA…WIGA), 225 to 245 (VWAW…LLPG), 269 to 289 (WSLY…IWPL), 296 to 316 (FGPL…VAYF), 353 to 373 (MFFE…GTAA), 381 to 401 (YVSG…NACA), 419 to 439 (GFML…HCTI), and 454 to 474 (GILA…DSCN). NADP(+) contacts are provided by residues lysine 477, arginine 481, leucine 516, and 528–529 (HY). A helical transmembrane segment spans residues 535–557 (FAVSWGLITGFESPFPWFYPVFF). Residues aspartate 568, 572-576 (CRRKY), and tyrosine 583 contribute to the NADP(+) site.

It belongs to the ERG4/ERG24 family.

The protein localises to the endoplasmic reticulum membrane. The enzyme catalyses ergosterol + NADP(+) = ergosta-5,7,22,24(28)-tetraen-3beta-ol + NADPH + H(+). It functions in the pathway steroid metabolism; ergosterol biosynthesis. Delta(24(24(1)))-sterol reductase; part of the third module of ergosterol biosynthesis pathway that includes the late steps of the pathway. ERG4 catalyzes the last step of ergosterol biosynthesis by converting ergosta-5,7,22,24(28)-tetraen-3beta-ol into ergosterol. The third module or late pathway involves the ergosterol synthesis itself through consecutive reactions that mainly occur in the endoplasmic reticulum (ER) membrane. Firstly, the squalene synthase ERG9 catalyzes the condensation of 2 farnesyl pyrophosphate moieties to form squalene, which is the precursor of all steroids. Squalene synthase is crucial for balancing the incorporation of farnesyl diphosphate (FPP) into sterol and nonsterol isoprene synthesis. Secondly, squalene is converted into lanosterol by the consecutive action of the squalene epoxidase ERG1 and the lanosterol synthase ERG7. Then, the delta(24)-sterol C-methyltransferase ERG6 methylates lanosterol at C-24 to produce eburicol. Eburicol is the substrate of the sterol 14-alpha demethylase encoded by CYP51A, CYP51B and CYP51C, to yield 4,4,24-trimethyl ergosta-8,14,24(28)-trienol. CYP51B encodes the enzyme primarily responsible for sterol 14-alpha-demethylation, and plays an essential role in ascospore formation. CYP51A encodes an additional sterol 14-alpha-demethylase, induced on ergosterol depletion and responsible for the intrinsic variation in azole sensitivity. The third CYP51 isoform, CYP51C, does not encode a sterol 14-alpha-demethylase, but is required for full virulence on host wheat ears. The C-14 reductase ERG24 then reduces the C14=C15 double bond which leads to 4,4-dimethylfecosterol. A sequence of further demethylations at C-4, involving the C-4 demethylation complex containing the C-4 methylsterol oxidases ERG25, the sterol-4-alpha-carboxylate 3-dehydrogenase ERG26 and the 3-keto-steroid reductase ERG27, leads to the production of fecosterol via 4-methylfecosterol. ERG28 has a role as a scaffold to help anchor ERG25, ERG26 and ERG27 to the endoplasmic reticulum. The C-8 sterol isomerase ERG2 then catalyzes the reaction which results in unsaturation at C-7 in the B ring of sterols and thus converts fecosterol to episterol. The sterol-C5-desaturases ERG3A and ERG3BB then catalyze the introduction of a C-5 double bond in the B ring to produce 5-dehydroepisterol. The C-22 sterol desaturases ERG5A and ERG5B further convert 5-dehydroepisterol into ergosta-5,7,22,24(28)-tetraen-3beta-ol by forming the C-22(23) double bond in the sterol side chain. Finally, ergosta-5,7,22,24(28)-tetraen-3beta-ol is substrate of the C-24(28) sterol reductase ERG4 to produce ergosterol. The sequence is that of Delta(24(24(1)))-sterol reductase from Gibberella zeae (strain ATCC MYA-4620 / CBS 123657 / FGSC 9075 / NRRL 31084 / PH-1) (Wheat head blight fungus).